Reading from the N-terminus, the 115-residue chain is Superoxide reductase (115 aa).

Residues Glu-14, His-16, His-41, His-47, Cys-102, and His-105 each coordinate Fe cation.

Belongs to the desulfoferrodoxin family. Homotetramer. Fe cation serves as cofactor.

The enzyme catalyses reduced [rubredoxin] + superoxide + 2 H(+) = oxidized [rubredoxin] + H2O2. Functionally, uses electrons from reduced NADP, by way of rubredoxin and an oxidoreductase, to catalyze the reduction of superoxide to hydrogen peroxide. The protein is Superoxide reductase (sorA) of Pyrococcus horikoshii (strain ATCC 700860 / DSM 12428 / JCM 9974 / NBRC 100139 / OT-3).